The chain runs to 343 residues: Single-pass membrane and coiled-coil domain-containing protein 2 (343 aa).

A compositionally biased stretch (basic and acidic residues) spans 86-99; sequence EHDQDLSKQDKQET. Residues 86–108 are disordered; it reads EHDQDLSKQDKQETDVDEDPQAS. Residues 152–238 are a coiled coil; the sequence is TEKIDNIIKK…SAKLRMYQME (87 aa). The helical transmembrane segment at 284-304 threads the bilayer; it reads IFIMFDVLTVTGLLCYILFFG.

It localises to the membrane. This Homo sapiens (Human) protein is Single-pass membrane and coiled-coil domain-containing protein 2 (SMCO2).